The sequence spans 165 residues: Protein SprT (165 aa).

The region spanning E10–F158 is the SprT-like domain. H69 provides a ligand contact to Zn(2+). The active site involves E70. H73 provides a ligand contact to Zn(2+).

This sequence belongs to the SprT family. Zn(2+) serves as cofactor.

Its subcellular location is the cytoplasm. The sequence is that of Protein SprT from Pseudomonas aeruginosa (strain LESB58).